Reading from the N-terminus, the 360-residue chain is Ribosomal RNA large subunit methyltransferase F (360 aa).

Positions 1-38 (MTRSTTPPMRAKHSSAKRSPSRSAAKVNPVSVKPNKPL) are disordered. The segment covering 10–20 (RAKHSSAKRSP) has biased composition (basic residues).

Belongs to the methyltransferase superfamily. METTL16/RlmF family.

The protein localises to the cytoplasm. The catalysed reaction is adenosine(1618) in 23S rRNA + S-adenosyl-L-methionine = N(6)-methyladenosine(1618) in 23S rRNA + S-adenosyl-L-homocysteine + H(+). Its function is as follows. Specifically methylates the adenine in position 1618 of 23S rRNA. This chain is Ribosomal RNA large subunit methyltransferase F, found in Shewanella frigidimarina (strain NCIMB 400).